Consider the following 254-residue polypeptide: Alcohol dehydrogenase (254 aa).

10 to 33 (FVAGLGGIGLDTSREIVKSGPKNL) provides a ligand contact to NAD(+). Ser138 contributes to the substrate binding site. Catalysis depends on Tyr151, which acts as the Proton acceptor.

The protein belongs to the short-chain dehydrogenases/reductases (SDR) family. Homodimer.

It carries out the reaction a primary alcohol + NAD(+) = an aldehyde + NADH + H(+). The catalysed reaction is a secondary alcohol + NAD(+) = a ketone + NADH + H(+). The polypeptide is Alcohol dehydrogenase (Adh) (Drosophila flavomontana (Fruit fly)).